Consider the following 198-residue polypeptide: Dermorphin-2 (198 aa).

Residues 1–20 (MSFLKKSLLLILFLGLVSLS) form the signal peptide. A propeptide spanning residues 21–45 (VCKEEKRVSEEENENEENHEEGSEM) is cleaved from the precursor. The segment at 24 to 198 (EEKRVSEEEN…AFGYPSGEAK (175 aa)) is disordered. At A49 the chain carries D-alanine (Ala). A Serine amide modification is found at S54. Over residues 56 to 65 (EAKKIKRESE) the composition is skewed to basic and acidic residues. Positions 56-80 (EAKKIKRESEEEKEIEENHEEGSEM) are excised as a propeptide. The residue at position 84 (A84) is a D-alanine (Ala). S89 carries the serine amide modification. Positions 91–115 (EAKKIKRESEEENENEENHEEGSEM) are excised as a propeptide. Positions 100–109 (EEENENEENH) are enriched in acidic residues. D-alanine (Ala) is present on A119. S124 bears the Serine amide mark. Over residues 126 to 135 (EAKKIKRESE) the composition is skewed to basic and acidic residues. A propeptide spanning residues 126 to 150 (EAKKIKRESEEEKEIEENHEEGSEM) is cleaved from the precursor. At A154 the chain carries D-alanine (Ala). Position 159 is a serine amide (S159). Residues 161–185 (EAKKIKRESEEENENEENHEEGSEM) constitute a propeptide that is removed on maturation. A compositionally biased stretch (acidic residues) spans 170 to 179 (EEENENEENH). Position 189 is a D-alanine (Ala) (A189). At S194 the chain carries Serine amide. Residues 196–198 (EAK) constitute a propeptide that is removed on maturation.

This sequence belongs to the frog skin active peptide (FSAP) family. Dermorphin subfamily. As to expression, expressed by the skin glands.

It localises to the secreted. In terms of biological role, dermorphin has a very potent opiate-like activity. It has high affinity and selectivity for mu-type opioid receptors. The protein is Dermorphin-2 of Phyllomedusa sauvagei (Sauvage's leaf frog).